We begin with the raw amino-acid sequence, 1182 residues long: Protein patched homolog 2 (1182 aa).

Residues 1–57 (MVRPLSLGELPPSYTPPARSSAPHILAGSLQAPLWLRAYFQGLLFSLGCRIQKHCGK) lie on the Cytoplasmic side of the membrane. The chain crosses the membrane as a helical span at residues 58–78 (VLFLGLVAFGALALGLRVAVI). Residues 79–394 (ETDLEQLWVE…DILRAFSEVS (316 aa)) are Extracellular-facing. Residue Asn370 is glycosylated (N-linked (GlcNAc...) asparagine). The region spanning 394-552 (STTRVVGGYL…MLVFPAILSL (159 aa)) is the SSD domain. Residues 395–414 (TTRVVGGYLLMLAYACVTML) traverse the membrane as a helical segment. Residues 415-428 (RWDCAQSQGAVGLA) are Cytoplasmic-facing. Residues 429-449 (GVLLVALAVASGLGLCALLGI) form a helical membrane-spanning segment. At 450–457 (TFNAATTQ) the chain is on the extracellular side. The helical transmembrane segment at 458 to 478 (VLPFLALGIGVDDIFLLAHAF) threads the bilayer. Residues 479–501 (TKAPPDTPLPERMGECLRSTGTS) lie on the Cytoplasmic side of the membrane. The helical transmembrane segment at 502 to 522 (VALTSVNNMVAFFMAALVPIP) threads the bilayer. The Extracellular segment spans residues 523-531 (ALRAFSLQA). Residues 532–552 (AIVVGCNFAAVMLVFPAILSL) traverse the membrane as a helical segment. The Cytoplasmic segment spans residues 553–686 (DLRRRHRQRL…APLLLQTRAK (134 aa)). A helical transmembrane segment spans residues 687-707 (ALVLLFFGALLGLSLYGATLV). The Extracellular segment spans residues 708–963 (QDGLALTDVV…WEQYLGLRRC (256 aa)). The N-linked (GlcNAc...) asparagine glycan is linked to Asn812. The helical transmembrane segment at 964–984 (FLLAVCILLVCTFLVCALLLL) threads the bilayer. Over 985–991 (SPWTAGL) the chain is Cytoplasmic. Residues 992–1012 (IVLVLAMMTVELFGIMGFLGI) traverse the membrane as a helical segment. Position 1013 (Lys1013) is a topological domain, extracellular. A helical transmembrane segment spans residues 1014 to 1034 (LSAIPVVILVASIGIGVEFTV). The Cytoplasmic portion of the chain corresponds to 1035–1064 (HVALGFLTSHGSRNLRAASALEQTFAPVTD). The chain crosses the membrane as a helical span at residues 1065–1085 (GAVSTLLGLLMLAGSNFDFII). A topological domain (extracellular) is located at residue Arg1086. A helical membrane pass occupies residues 1087-1107 (YFFVVLTVLTLLGLLHGLLLL). At 1108-1182 (PVLLSILGPP…YVHPASEEPT (75 aa)) the chain is on the cytoplasmic side.

It belongs to the patched family. Expressed in epithelial cells of the developing hair, tooth and whisker.

It localises to the membrane. In terms of biological role, plays a role in the control of cellular growth. May have a role in epidermal development. May act as a receptor for Sonic hedgehog (SHH). The protein is Protein patched homolog 2 (Ptch2) of Mus musculus (Mouse).